Consider the following 460-residue polypeptide: Xyloglucan 6-xylosyltransferase 1 (460 aa).

The Cytoplasmic portion of the chain corresponds to 1–20; sequence MIEKCIGAHRFRRLQRFMRQ. Residues 21-40 form a helical; Signal-anchor for type II membrane protein membrane-spanning segment; it reads GKVTILCLVLTVIVLRGTIG. Topologically, residues 41 to 460 are lumenal; that stretch reads AGKFGTPEKD…KAAKLSTTTT (420 aa). UDP-alpha-D-xylose is bound by residues G156 and 227 to 229; that span reads DSD. Residues D227 and D229 each coordinate Mn(2+). H346 is a substrate binding site. Positions 377, 380, and 382 each coordinate UDP-alpha-D-xylose. Residue H377 participates in Mn(2+) binding. Residues K382 and 389–390 contribute to the substrate site; that span reads DY. N431 carries N-linked (GlcNAc...) asparagine glycosylation.

The protein belongs to the glycosyltransferase 34 family. In terms of assembly, forms homodimer. Interacts with XXT2. Mn(2+) is required as a cofactor.

Its subcellular location is the golgi apparatus membrane. The enzyme catalyses Transfers an alpha-D-xylosyl residue from UDP-D-xylose to a glucose residue in xyloglucan, forming an alpha-(1-&gt;6)-D-xylosyl-D-glucose linkage.. Its pathway is protein modification; protein glycosylation. Functionally, xylosyltransferase specific to UDP-D-xylose that accepts both cellopentaose and cellohexaose as substrates, with a better use of cellohexaose, to produce xyloglucan. Adds preferentially the first xylosyl residue to the fourth glucosyl residue from the reducing end of both acceptors. Transfer one xylose mainly to the second glucose residue from the non-reducing end. The acceptor should have a minimum of four glucose residues. The chain is Xyloglucan 6-xylosyltransferase 1 from Arabidopsis thaliana (Mouse-ear cress).